Reading from the N-terminus, the 56-residue chain is Keratin-associated protein 20-1 (56 aa).

The protein belongs to the KRTAP type 20 family. Interacts with hair keratins.

Its function is as follows. In the hair cortex, hair keratin intermediate filaments are embedded in an interfilamentous matrix, consisting of hair keratin-associated proteins (KRTAP), which are essential for the formation of a rigid and resistant hair shaft through their extensive disulfide bond cross-linking with abundant cysteine residues of hair keratins. The matrix proteins include the high-sulfur and high-glycine-tyrosine keratins. The protein is Keratin-associated protein 20-1 (KRTAP20-1) of Homo sapiens (Human).